The following is a 202-amino-acid chain: Snake venom metalloproteinase fibrolase (202 aa).

The Peptidase M12B domain maps to 6–202 (RYIELVIVAD…HNPQCILNQP (197 aa)). A Ca(2+)-binding site is contributed by glutamate 9. Asparagine 25 carries an N-linked (GlcNAc...) asparagine glycan. Aspartate 93 lines the Ca(2+) pocket. 3 disulfide bridges follow: cysteine 117–cysteine 197, cysteine 157–cysteine 181, and cysteine 159–cysteine 164. Position 142 (histidine 142) interacts with Zn(2+). Glutamate 143 is an active-site residue. Positions 146 and 152 each coordinate Zn(2+). 2 residues coordinate Ca(2+): cysteine 197 and asparagine 200.

This sequence belongs to the venom metalloproteinase (M12B) family. P-I subfamily. As to quaternary structure, monomer. Zn(2+) serves as cofactor. In terms of processing, glycosylated. In terms of tissue distribution, expressed by the venom gland.

The protein localises to the secreted. The enzyme catalyses Hydrolysis of 14-Ala-|-Leu-15 in insulin B chain and 413-Lys-|-Leu-414 in alpha-chain of fibrinogen.. With respect to regulation, activated by calcium and magnesium ions. Inhibited by EDTA, DTT and L-cysteine. Activity is not affected by PMSF or heparin. In terms of biological role, has fibrino(geno)lytic activity on the alpha and beta chains of fibrinogen (FGA and FGB). Inhibits human ADP- and collagen-induced platelet aggregation on platelet-rich plasma but does not affect the thrombin-induced aggregation of rabbit washed platelets. Slightly degrades plasminogen. This is Snake venom metalloproteinase fibrolase from Macrovipera lebetinus (Levantine viper).